We begin with the raw amino-acid sequence, 169 residues long: MSEQKQDVAATEEQQPVLQIQRIYVKDVSFEAPNLPHIFQQEWKPKLGFDLSTETTQVGDDLYEVVLNISVETTLEDSGDVAFICEVKQAGVFTISGLEDVQMAHCLTSQCPNMLFPYARELVSNLVNRGTFPALNLSPVNFDALFVEYMNRQQAENAEEKSEEEQTKH.

This sequence belongs to the SecB family. Homotetramer, a dimer of dimers. One homotetramer interacts with 1 SecA dimer.

It is found in the cytoplasm. One of the proteins required for the normal export of preproteins out of the cell cytoplasm. It is a molecular chaperone that binds to a subset of precursor proteins, maintaining them in a translocation-competent state. It also specifically binds to its receptor SecA. The protein is Protein-export protein SecB of Haemophilus influenzae (strain 86-028NP).